The primary structure comprises 111 residues: Cytochrome b-c1 complex subunit 7 (111 aa).

N-acetylalanine is present on alanine 2. The residue at position 12 (lysine 12) is an N6-acetyllysine; alternate. At lysine 12 the chain carries N6-succinyllysine; alternate. Lysine 19 carries the N6-acetyllysine modification. At lysine 78 the chain carries N6-acetyllysine; alternate. At lysine 78 the chain carries N6-succinyllysine; alternate. N6-acetyllysine is present on lysine 83. Lysine 88 is subject to N6-acetyllysine; alternate. Lysine 88 bears the N6-succinyllysine; alternate mark. Lysine 96 is modified (N6-acetyllysine).

The protein belongs to the UQCRB/QCR7 family. In terms of assembly, component of the ubiquinol-cytochrome c oxidoreductase (cytochrome b-c1 complex, complex III, CIII), a multisubunit enzyme composed of 11 subunits. The complex is composed of 3 respiratory subunits cytochrome b, cytochrome c1 and Rieske protein UQCRFS1, 2 core protein subunits UQCRC1/QCR1 and UQCRC2/QCR2, and 6 low-molecular weight protein subunits UQCRH/QCR6, UQCRB/QCR7, UQCRQ/QCR8, UQCR10/QCR9, UQCR11/QCR10 and subunit 9, the cleavage product of Rieske protein UQCRFS1. The complex exists as an obligatory dimer and forms supercomplexes (SCs) in the inner mitochondrial membrane with NADH-ubiquinone oxidoreductase (complex I, CI) and cytochrome c oxidase (complex IV, CIV), resulting in different assemblies (supercomplex SCI(1)III(2)IV(1) and megacomplex MCI(2)III(2)IV(2)).

The protein resides in the mitochondrion inner membrane. Functionally, component of the ubiquinol-cytochrome c oxidoreductase, a multisubunit transmembrane complex that is part of the mitochondrial electron transport chain which drives oxidative phosphorylation. The respiratory chain contains 3 multisubunit complexes succinate dehydrogenase (complex II, CII), ubiquinol-cytochrome c oxidoreductase (cytochrome b-c1 complex, complex III, CIII) and cytochrome c oxidase (complex IV, CIV), that cooperate to transfer electrons derived from NADH and succinate to molecular oxygen, creating an electrochemical gradient over the inner membrane that drives transmembrane transport and the ATP synthase. The cytochrome b-c1 complex catalyzes electron transfer from ubiquinol to cytochrome c, linking this redox reaction to translocation of protons across the mitochondrial inner membrane, with protons being carried across the membrane as hydrogens on the quinol. In the process called Q cycle, 2 protons are consumed from the matrix, 4 protons are released into the intermembrane space and 2 electrons are passed to cytochrome c. This chain is Cytochrome b-c1 complex subunit 7 (Uqcrb), found in Mus musculus (Mouse).